The sequence spans 150 residues: UPF0208 membrane protein VP2081 (150 aa).

2 consecutive transmembrane segments (helical) span residues 42-62 (FGIK…MAFN) and 70-90 (SIVV…WLGA).

The protein belongs to the UPF0208 family.

The protein resides in the cell inner membrane. This Vibrio parahaemolyticus serotype O3:K6 (strain RIMD 2210633) protein is UPF0208 membrane protein VP2081.